The sequence spans 238 residues: Metal-independent phosphoserine phosphatase (238 aa).

Residue His-32 is the Tele-phosphohistidine intermediate of the active site. Glu-107 (proton donor/acceptor) is an active-site residue.

The protein belongs to the phosphoglycerate mutase family.

The enzyme catalyses O-phospho-L-serine + H2O = L-serine + phosphate. It catalyses the reaction O-phospho-D-serine + H2O = D-serine + phosphate. Its function is as follows. Phosphoglycerate mutase-like protein lacking PGM activity, but having a low metal-independent phosphoserine phosphatase activity in vitro. May be involved in serine biosynthesis. The chain is Metal-independent phosphoserine phosphatase (IPSP) from Arabidopsis thaliana (Mouse-ear cress).